We begin with the raw amino-acid sequence, 670 residues long: Solute carrier organic anion transporter family member 1A6 (670 aa).

Residues 1–20 lie on the Cytoplasmic side of the membrane; the sequence is MGEPEKRAGTHGIRCFAKIK. The helical transmembrane segment at 21–40 threads the bilayer; it reads VFLLALTWAYASKALSATYM. The Extracellular segment spans residues 41-59; the sequence is NSMLTQIERRFNISTSIVG. The N-linked (GlcNAc...) asparagine glycan is linked to Asn-52. The helical transmembrane segment at 60–80 threads the bilayer; sequence LINGSFEVGNLLLIIFVSYFG. Over 81 to 86 the chain is Cytoplasmic; sequence RKRHRP. Residues 87–111 traverse the membrane as a helical segment; that stretch reads IMIGIGCAVMGLGCFIISLPHFLMG. Over 112-155 the chain is Extracellular; that stretch reads RYEYETTISPTSNLSSNSFLCMENRTQTLKPTQDPAECVKEMKS. Residues Asn-124 and Asn-135 are each glycosylated (N-linked (GlcNAc...) asparagine). Residues 156–184 form a helical membrane-spanning segment; it reads LMWIYVLVGNIIRGIGETPIMPLGISYIE. Residues 185 to 203 are Cytoplasmic-facing; it reads DFAKSENSPFYIGILEVGK. Residues 204–224 traverse the membrane as a helical segment; sequence ITGPIAAIWLGSFCATIYVDM. Residues 225–242 lie on the Extracellular side of the membrane; it reads GSVNTDDLTITPTDTRCV. A helical transmembrane segment spans residues 243 to 267; it reads GAWWIGFLVCAGLNILISIPFFFFP. At 268–311 the chain is on the cytoplasmic side; the sequence is KTFPKEGPEDMANETKNDEGDKHREKAKEEKRGITKDFFLFMKS. A disordered region spans residues 276–295; the sequence is EDMANETKNDEGDKHREKAK. Residues 312–333 traverse the membrane as a helical segment; it reads LSCNPIYMLCVLTSVLQVNGFV. Over 334 to 353 the chain is Extracellular; it reads SIFTFKPKYLEHHYGKSSSE. The helical transmembrane segment at 354-377 threads the bilayer; that stretch reads AIFLMGLYTLPSVCVGYLISGFIM. Residues 378 to 381 lie on the Cytoplasmic side of the membrane; the sequence is KKFK. The helical transmembrane segment at 382-405 threads the bilayer; that stretch reads ITLKKAAFISYCLGMSECLLSLCN. The Extracellular segment spans residues 406–513; that stretch reads FMLTCDNVPI…PDCANKLQYF (108 aa). The region spanning 433–488 is the Kazal-like domain; the sequence is NTVLADCNTRCSCLTKTWDPVCGDNGLAYITPCLAGCEKSVGSGINMVLQDCSCIQ. Disulfide bonds link Cys-439–Cys-469, Cys-445–Cys-465, and Cys-454–Cys-486. N-linked (GlcNAc...) asparagine glycosylation occurs at Asn-492. The helical transmembrane segment at 514–536 threads the bilayer; it reads LIITVFCSFFYSLSLIPGYMIFL. Residues 537-545 are Cytoplasmic-facing; it reads RCMKSEEKS. The helical transmembrane segment at 546 to 571 threads the bilayer; it reads LGIGLQAFCMRILGGILAPIYFGVLI. Over 572–605 the chain is Extracellular; sequence DRTCLHWGTQKCGEPGACRTYEINSFRSIYLGLP. A helical transmembrane segment spans residues 606-623; it reads AALRGSSYLPAFFILRLM. The Cytoplasmic portion of the chain corresponds to 624-670; sequence RKFQFPGDINSPVTDHVEMMLTEKESEHTDVHRSPQVENDGELKTKL. Ser-634 carries the phosphoserine modification. The disordered stretch occupies residues 647-670; sequence KESEHTDVHRSPQVENDGELKTKL.

It belongs to the organo anion transporter (TC 2.A.60) family.

It is found in the cell membrane. May mediate the Na(+)-independent transport of organic anions. This chain is Solute carrier organic anion transporter family member 1A6 (Slco1a6), found in Rattus norvegicus (Rat).